Here is a 90-residue protein sequence, read N- to C-terminus: U7-theraphotoxin-Hhn1l (90 aa).

The first 19 residues, Met1–Ser19, serve as a signal peptide directing secretion. A propeptide spanning residues Phe20–Glu50 is cleaved from the precursor. Cystine bridges form between Cys51/Cys65, Cys58/Cys70, and Cys64/Cys81.

The protein belongs to the neurotoxin 10 (Hwtx-1) family. 13 (Hntx-13) subfamily. As to expression, expressed by the venom gland.

It localises to the secreted. Ion channel inhibitor. This chain is U7-theraphotoxin-Hhn1l, found in Cyriopagopus hainanus (Chinese bird spider).